A 328-amino-acid polypeptide reads, in one-letter code: GTPase Obg (328 aa).

The region spanning 2–160 is the Obg domain; sequence YNFKDSVNIT…LSVRLELFLV (159 aa). The region spanning 161–326 is the OBG-type G domain; the sequence is ADIGLVGLPN…LIKEFFILAK (166 aa). Residues 167 to 174, 192 to 196, 213 to 216, 280 to 283, and 307 to 309 contribute to the GTP site; these read GLPNAGKS, FTTKI, DIPG, NKLD, and SIY. Residues Ser-174 and Thr-194 each contribute to the Mg(2+) site.

The protein belongs to the TRAFAC class OBG-HflX-like GTPase superfamily. OBG GTPase family. Monomer. The cofactor is Mg(2+).

It is found in the cytoplasm. In terms of biological role, an essential GTPase which binds GTP, GDP and possibly (p)ppGpp with moderate affinity, with high nucleotide exchange rates and a fairly low GTP hydrolysis rate. Plays a role in control of the cell cycle, stress response, ribosome biogenesis and in those bacteria that undergo differentiation, in morphogenesis control. The polypeptide is GTPase Obg (Borreliella burgdorferi (strain ATCC 35210 / DSM 4680 / CIP 102532 / B31) (Borrelia burgdorferi)).